We begin with the raw amino-acid sequence, 1203 residues long: Serine/threonine-protein kinase Nek1 (1203 aa).

Residues Tyr4–Ile258 form the Protein kinase domain. ATP-binding positions include Ile10–Ala18 and Lys33. Residue Asp128 is the Proton acceptor of the active site. At Thr156 the chain carries Phosphothreonine. Residue Thr162 is modified to Phosphothreonine; by autocatalysis. The segment at Leu329–Lys357 is disordered. A phosphoserine mark is found at Ser417 and Ser437. Residue Thr615 is modified to Phosphothreonine. Ser618 is subject to Phosphoserine. 2 disordered regions span residues Leu643–Arg662 and Ala674–Asp708. The span at Ala674–His683 shows a compositional bias: basic and acidic residues. Phosphoserine occurs at positions 750, 786, 820, and 832. Disordered stretches follow at residues Pro814–Val866 and Ala888–Val925. Over residues Asn839–Val850 the composition is skewed to acidic residues. Ser997 carries the phosphoserine modification. 2 disordered regions span residues Ser1021–Glu1045 and Arg1063–Ser1120. The residue at position 1071 (Ser1071) is a Phosphoserine.

This sequence belongs to the protein kinase superfamily. NEK Ser/Thr protein kinase family. NIMA subfamily. As to quaternary structure, binds to CBY2. Found in a complex with CFAP410, NEK1 and SPATA7. Interacts with CFAP410. Interacts (via Ser-997 phosphorylated form) with 14-3-3 proteins. The cofactor is Mg(2+). Predominantly in testes (germ cells and Sertoli cells). Lower levels in ovary (oocytes and granulosa cells), thymus and lung.

It is found in the nucleus. Its subcellular location is the cytoplasm. It localises to the cytoskeleton. The protein resides in the microtubule organizing center. The protein localises to the centrosome. The enzyme catalyses L-seryl-[protein] + ATP = O-phospho-L-seryl-[protein] + ADP + H(+). It carries out the reaction L-threonyl-[protein] + ATP = O-phospho-L-threonyl-[protein] + ADP + H(+). In terms of biological role, phosphorylates serines and threonines, but also appears to possess tyrosine kinase activity. Involved in DNA damage checkpoint control and for proper DNA damage repair. In response to injury that includes DNA damage, NEK1 phosphorylates VDAC1 to limit mitochondrial cell death. May be implicated in the control of meiosis. Involved in cilium assembly. The polypeptide is Serine/threonine-protein kinase Nek1 (Nek1) (Mus musculus (Mouse)).